We begin with the raw amino-acid sequence, 299 residues long: MAFDTHHVKKRNFSNSIDLPRKRISNFTSKNMKEVKRSPKQLAAYISRTVAQAVKSPEKLRKVLYHRKLVRRSFPNPCYKTKQSPKSGGCDMANKENELACAGHLPENLRHDSRTFVINTSDSGSSQTESPSSKYSGFFSEVSQDHETMAQVLFSRNLRLNVALTFWRKRSISELVAYLVRIEDLGVVVDCLPVLTNSLQEEKQYISLGCCVDLLPLVKSLLQSRFEEYVIVGLNWLQAVIKRWWSELSSTSEIISDGNIKILKQQLSGLWEQESHLTLVPGYTGNIAKDVDAYLLQLH.

The Nuclear localization signal motif lies at 8 to 15 (VKKRNFSN). Ser56 carries the post-translational modification Phosphoserine.

Interacts with KATNA1 and KATNAL1; these interactions are competed by KATNB1 which has a higher affinity for them.

The protein localises to the nucleus. Its subcellular location is the cytoplasm. The protein resides in the cytoskeleton. It is found in the spindle pole. Functionally, regulates microtubule-severing activity of KATNAL1 in a concentration-dependent manner in vitro. In Mus musculus (Mouse), this protein is KATNB1-like protein 1 (Katnbl1).